A 668-amino-acid chain; its full sequence is MVLQQTEPTDGADRKASDGPLTVTAPVPYAAGPTLRNPFPPIADYGFLSDCETTCLISSAGSVEWLCVPRPDSPSVFGAILDRGAGHFRLGPYGVSVPAARRYLPGSLILETTWQTHTGWLIVRDALVMGPWHDIDTRSRTHRRTPMDWDAEHILLRTVRCVSGTVELVMSCEPAFDYHRVSATWEYSGPAYGEAIARASRNPDSHPTLRLTTNLRIGIEGREARARTRLTEGDNVFVALSWSKHPAPQTYEEAADKMWKTSEAWRQWINVGDFPDHPWRAYLQRSALTLKGLTYSPTGALLAAPTTSLPETPQGERNWDYRYSWIRDSTFALWGLYTLGLDREADDFFSFIADVSGANNGERHPLQVMYGVGGERSLVEEELHHLSGYDNSRPVRIGNGAYNQRQHDIWGTMLDSVYLHAKSREQIPDALWPVLKNQVEEAIKHWKEPDRGIWEVRGEPQHFTSSKIMCWVALDRGSKLAELQGEKSYAQQWRAIAEEIKADVLARGVDKRGVLTQRYGDDALDASLLLAVLTRFLPADDPRIRATVLAIADELTEDGLVLRYRVEETDDGLAGEEGTFTICSFWLVSALVEIGEISRAKHLCERLLSFASPLHLYAEEIEPRTGRHLGNFPQAFTHLALINAVVHVIRAEEEADSSGVFVPANAPM.

The tract at residues 1–23 (MVLQQTEPTDGADRKASDGPLTV) is disordered.

Belongs to the glycosyl hydrolase 15 family. As to quaternary structure, homomultimer of 20 or more subunits. Mg(2+) serves as cofactor. The cofactor is phosphate.

The catalysed reaction is alpha,alpha-trehalose + H2O = alpha-D-glucose + beta-D-glucose. Its pathway is glycan degradation; trehalose degradation; D-glucose from alpha,alpha-trehalose: step 1/1. With respect to regulation, inhibited by pyrophosphate and polyphosphates. Also competitively inhibited by validoxylamine and castanospermine, but not by trehazolin. Its function is as follows. Catalyzes the hydrolysis of alpha,alpha-trehalose into two molecules of D-glucose. Does not hydrolyze maltose, isomaltose, sucrose, cellobiose, p-nitrophenyl-alpha-D-glucopyranoside, and methyl-alpha-D-glucopyranoside. Is also inactive on alpha,beta-trehalose, beta,beta-trehalose, alpha,alpha-trehalose-6,6'-dibehenate, trehalulose, nigerose, and trehalose dimycolate. This is Trehalase from Mycolicibacterium smegmatis (strain ATCC 700084 / mc(2)155) (Mycobacterium smegmatis).